A 104-amino-acid polypeptide reads, in one-letter code: L-rhamnose mutarotase (104 aa).

Y18 is a substrate binding site. H22 serves as the catalytic Proton donor. Residues Y41 and 76–77 (WW) contribute to the substrate site.

It belongs to the rhamnose mutarotase family. Homodimer.

The protein localises to the cytoplasm. The catalysed reaction is alpha-L-rhamnose = beta-L-rhamnose. It functions in the pathway carbohydrate metabolism; L-rhamnose metabolism. Its function is as follows. Involved in the anomeric conversion of L-rhamnose. The sequence is that of L-rhamnose mutarotase from Escherichia coli O17:K52:H18 (strain UMN026 / ExPEC).